We begin with the raw amino-acid sequence, 156 residues long: Small ribosomal subunit protein uS7 (156 aa).

This sequence belongs to the universal ribosomal protein uS7 family. In terms of assembly, part of the 30S ribosomal subunit. Contacts proteins S9 and S11.

In terms of biological role, one of the primary rRNA binding proteins, it binds directly to 16S rRNA where it nucleates assembly of the head domain of the 30S subunit. Is located at the subunit interface close to the decoding center, probably blocks exit of the E-site tRNA. In Rhodospirillum rubrum (strain ATCC 11170 / ATH 1.1.1 / DSM 467 / LMG 4362 / NCIMB 8255 / S1), this protein is Small ribosomal subunit protein uS7.